The primary structure comprises 457 residues: Methylenetetrahydrofolate--tRNA-(uracil-5-)-methyltransferase TrmFO (457 aa).

12–17 (GGGLAG) lines the FAD pocket.

Belongs to the MnmG family. TrmFO subfamily. The cofactor is FAD.

It localises to the cytoplasm. The enzyme catalyses uridine(54) in tRNA + (6R)-5,10-methylene-5,6,7,8-tetrahydrofolate + NADH + H(+) = 5-methyluridine(54) in tRNA + (6S)-5,6,7,8-tetrahydrofolate + NAD(+). It carries out the reaction uridine(54) in tRNA + (6R)-5,10-methylene-5,6,7,8-tetrahydrofolate + NADPH + H(+) = 5-methyluridine(54) in tRNA + (6S)-5,6,7,8-tetrahydrofolate + NADP(+). Catalyzes the folate-dependent formation of 5-methyl-uridine at position 54 (M-5-U54) in all tRNAs. In Myxococcus xanthus (strain DK1622), this protein is Methylenetetrahydrofolate--tRNA-(uracil-5-)-methyltransferase TrmFO.